We begin with the raw amino-acid sequence, 460 residues long: Phosphomethylpyrimidine synthase (460 aa).

Residues Asn-80, Met-109, Tyr-139, His-175, 195-197 (SRG), 236-239 (DSLR), and Glu-275 each bind substrate. Position 279 (His-279) interacts with Zn(2+). Position 302 (Tyr-302) interacts with substrate. His-343 serves as a coordination point for Zn(2+). [4Fe-4S] cluster-binding residues include Cys-423, Cys-426, and Cys-431.

It belongs to the ThiC family. [4Fe-4S] cluster is required as a cofactor.

The catalysed reaction is 5-amino-1-(5-phospho-beta-D-ribosyl)imidazole + S-adenosyl-L-methionine = 4-amino-2-methyl-5-(phosphooxymethyl)pyrimidine + CO + 5'-deoxyadenosine + formate + L-methionine + 3 H(+). It participates in cofactor biosynthesis; thiamine diphosphate biosynthesis. In terms of biological role, catalyzes the synthesis of the hydroxymethylpyrimidine phosphate (HMP-P) moiety of thiamine from aminoimidazole ribotide (AIR) in a radical S-adenosyl-L-methionine (SAM)-dependent reaction. The protein is Phosphomethylpyrimidine synthase of Microcystis aeruginosa (strain NIES-843 / IAM M-2473).